The chain runs to 578 residues: Proline--tRNA ligase (578 aa).

Belongs to the class-II aminoacyl-tRNA synthetase family. ProS type 1 subfamily. Homodimer.

Its subcellular location is the cytoplasm. The enzyme catalyses tRNA(Pro) + L-proline + ATP = L-prolyl-tRNA(Pro) + AMP + diphosphate. Functionally, catalyzes the attachment of proline to tRNA(Pro) in a two-step reaction: proline is first activated by ATP to form Pro-AMP and then transferred to the acceptor end of tRNA(Pro). As ProRS can inadvertently accommodate and process non-cognate amino acids such as alanine and cysteine, to avoid such errors it has two additional distinct editing activities against alanine. One activity is designated as 'pretransfer' editing and involves the tRNA(Pro)-independent hydrolysis of activated Ala-AMP. The other activity is designated 'posttransfer' editing and involves deacylation of mischarged Ala-tRNA(Pro). The misacylated Cys-tRNA(Pro) is not edited by ProRS. The polypeptide is Proline--tRNA ligase (Paraburkholderia phymatum (strain DSM 17167 / CIP 108236 / LMG 21445 / STM815) (Burkholderia phymatum)).